The chain runs to 264 residues: Tryptophan synthase alpha chain (264 aa).

Catalysis depends on proton acceptor residues glutamate 44 and aspartate 55.

This sequence belongs to the TrpA family. In terms of assembly, tetramer of two alpha and two beta chains.

It catalyses the reaction (1S,2R)-1-C-(indol-3-yl)glycerol 3-phosphate + L-serine = D-glyceraldehyde 3-phosphate + L-tryptophan + H2O. It functions in the pathway amino-acid biosynthesis; L-tryptophan biosynthesis; L-tryptophan from chorismate: step 5/5. Functionally, the alpha subunit is responsible for the aldol cleavage of indoleglycerol phosphate to indole and glyceraldehyde 3-phosphate. This chain is Tryptophan synthase alpha chain, found in Lactiplantibacillus plantarum (strain ATCC BAA-793 / NCIMB 8826 / WCFS1) (Lactobacillus plantarum).